The sequence spans 142 residues: Hemoglobin subunit alpha-1 (142 aa).

The Globin domain maps to 2 to 142 (LLSADDKKHI…VSSVLTSKYR (141 aa)). Residue H59 coordinates O2. H88 contributes to the heme b binding site.

Belongs to the globin family. In terms of assembly, heterotetramer of two alpha chains and two beta chains. In terms of tissue distribution, red blood cells.

In terms of biological role, involved in oxygen transport from the lung to the various peripheral tissues. The protein is Hemoglobin subunit alpha-1 (hba1) of Xenopus borealis (Kenyan clawed frog).